Consider the following 78-residue polypeptide: Large ribosomal subunit protein bL28 (78 aa).

The protein belongs to the bacterial ribosomal protein bL28 family.

The protein is Large ribosomal subunit protein bL28 of Prochlorococcus marinus (strain SARG / CCMP1375 / SS120).